The chain runs to 306 residues: Protoheme IX farnesyltransferase (306 aa).

Transmembrane regions (helical) follow at residues 32–52 (VVQL…PGMP), 57–77 (WALM…AAAF), 108–128 (LLFS…WVNP), 129–149 (LTMW…TVIL), 157–177 (IVIG…AMTG), 183–203 (ALIL…ALAL), 230–250 (VFLY…YGMS), 252–272 (WIYL…GFRL), and 285–305 (FRFS…DHYL).

This sequence belongs to the UbiA prenyltransferase family. Protoheme IX farnesyltransferase subfamily.

It is found in the cell inner membrane. It catalyses the reaction heme b + (2E,6E)-farnesyl diphosphate + H2O = Fe(II)-heme o + diphosphate. The protein operates within porphyrin-containing compound metabolism; heme O biosynthesis; heme O from protoheme: step 1/1. Its function is as follows. Converts heme B (protoheme IX) to heme O by substitution of the vinyl group on carbon 2 of heme B porphyrin ring with a hydroxyethyl farnesyl side group. In Acidovorax ebreus (strain TPSY) (Diaphorobacter sp. (strain TPSY)), this protein is Protoheme IX farnesyltransferase.